The chain runs to 157 residues: SsrA-binding protein (157 aa).

It belongs to the SmpB family.

It localises to the cytoplasm. Its function is as follows. Required for rescue of stalled ribosomes mediated by trans-translation. Binds to transfer-messenger RNA (tmRNA), required for stable association of tmRNA with ribosomes. tmRNA and SmpB together mimic tRNA shape, replacing the anticodon stem-loop with SmpB. tmRNA is encoded by the ssrA gene; the 2 termini fold to resemble tRNA(Ala) and it encodes a 'tag peptide', a short internal open reading frame. During trans-translation Ala-aminoacylated tmRNA acts like a tRNA, entering the A-site of stalled ribosomes, displacing the stalled mRNA. The ribosome then switches to translate the ORF on the tmRNA; the nascent peptide is terminated with the 'tag peptide' encoded by the tmRNA and targeted for degradation. The ribosome is freed to recommence translation, which seems to be the essential function of trans-translation. The chain is SsrA-binding protein from Bacillus licheniformis (strain ATCC 14580 / DSM 13 / JCM 2505 / CCUG 7422 / NBRC 12200 / NCIMB 9375 / NCTC 10341 / NRRL NRS-1264 / Gibson 46).